Consider the following 363-residue polypeptide: FMNH(2)-dependent dimethylsulfone monooxygenase (363 aa).

This sequence belongs to the SsuD family.

The enzyme catalyses dimethyl sulfone + FMNH2 + O2 = methanesulfinate + FMN + formaldehyde + H2O + 2 H(+). In terms of biological role, involved in the dimethyl sulfide degradation pathway. Catalyzes the oxidation of dimethylsulfone (DMSO2) to yield methanesulfinate, which is oxidized spontaneously to methanesulfonate in the presence of dioxygen and FMNH(2). This Pseudomonas putida (Arthrobacter siderocapsulatus) protein is FMNH(2)-dependent dimethylsulfone monooxygenase.